A 321-amino-acid polypeptide reads, in one-letter code: MATH domain and coiled-coil domain-containing protein At3g58410 (321 aa).

Residues 6–128 (GKKFAWVIKN…NGELMIVAEV (123 aa)) form the MATH domain. Positions 255-310 (KVDWLEKKLDQVRDKKEKERSCLAKLQETEETLLKLKQKCTELDALMDTEKAELSA) form a coiled coil.

This is MATH domain and coiled-coil domain-containing protein At3g58410 from Arabidopsis thaliana (Mouse-ear cress).